Here is a 594-residue protein sequence, read N- to C-terminus: MRETLEALNSLGFSVGQPEMAPQSEPRDGFSNAQEKMSSRGESTLHSCSGHETPGQKEGIHTEQAEAPCMGSQASTPQKAEPAGSVPGEEWMIRKVKVEDEDQEAEEEVEWPQHLSFLPSPFPTPDLGQLAVTYKLEPGTPGALGGIALSGWAPIPEKPYGCEECERRFRDQLTLRLHQRLHRGEGPCACPDCGRSFTQRAHMLLHQRSHRGERPFPCSECDKRFSKKAHLTRHLRTHTGERPYPCAECGKRFSQKIHLGSHQKTHTGERPFPCTECEKRFRKKTHLIRHQRIHTGERPYQCTQCTRSFTHKQHLVRHQRVHDAASRTRSSPDIPVAPHSPTASLTPSPPGPKPFACSHCGQSFGWKKNLATHQSLHLTEGRPFGCDECALGTNVDPAAEPSACTPHAPDCGPGSGPAAPQRTTSSERSFFCPDCGRGFAHGQHLARHRRVHTGERPFACAQCGRRFGSRPNLVAHSRAHSGARPFACAQCGRRFSRKSHLGRHQAVHTGSRPHACAVCARCFSSKTNLVRHQAIHTGSRPFSCPQCAKSFSRKTHLVRHQRIHGDAALPAPASNLSAPAWSNPSEVVPPPIFF.

A disordered region spans residues 1–86; the sequence is MRETLEALNS…PQKAEPAGSV (86 aa). The segment at 1–183 is interaction with STAT3; sequence MRETLEALNS…TLRLHQRLHR (183 aa). A compositionally biased stretch (polar residues) spans 31–47; that stretch reads SNAQEKMSSRGESTLHS. Basic and acidic residues predominate over residues 54-64; that stretch reads PGQKEGIHTEQ. Lys97 participates in a covalent cross-link: Glycyl lysine isopeptide (Lys-Gly) (interchain with G-Cter in SUMO2). 12 C2H2-type zinc fingers span residues 160-182, 188-210, 216-238, 244-266, 272-294, 300-322, 355-377, 430-452, 458-480, 486-508, 514-536, and 542-564; these read YGCE…QRLH, CACP…QRSH, FPCS…LRTH, YPCA…QKTH, FPCT…QRIH, YQCT…QRVH, FACS…QSLH, FFCP…RRVH, FACA…SRAH, FACA…QAVH, HACA…QAIH, and FSCP…QRIH. Residues 313-351 are disordered; that stretch reads QHLVRHQRVHDAASRTRSSPDIPVAPHSPTASLTPSPPG. A Glycyl lysine isopeptide (Lys-Gly) (interchain with G-Cter in SUMO2) cross-link involves residue Lys368.

The protein belongs to the krueppel C2H2-type zinc-finger protein family. As to quaternary structure, interacts with STAT3. Enhances STAT3 activity by keeping it in the nucleus.

The protein resides in the nucleus. Functionally, transcription factor that promotes adipocyte differentiation and suppresses osteoblast differentiation in the bone marrow. Enhances the osteoclast-supporting ability of stromal cells. Binds with STAT3 the consensus sequence 5'-CTTCTGGGAAGA-3' of the acute phase response element (APRE). Transactivates several promoters including FOS, OSM and PPARG. Recruits a histone deacetylase complex. The polypeptide is Zinc finger protein 467 (Znf467) (Mus musculus (Mouse)).